The primary structure comprises 208 residues: AN1-type zinc finger protein 6 (208 aa).

An A20-type zinc finger spans residues 8–42 (SQVPMLCSTGCGFYGNPRTNGMCSVCYKEHLQRQN). Residues cysteine 14, cysteine 18, cysteine 30, and cysteine 33 each coordinate Zn(2+). Residues 41-68 (QNSSNGRISPPATSVSSLSESLPVQCTD) are compositionally biased toward polar residues. The segment at 41–140 (QNSSNGRISP…PSEEQSKSLE (100 aa)) is disordered. Serine 49 carries the post-translational modification Phosphoserine. Positions 80–94 (STSSSMQPSPVSNQS) are enriched in low complexity. Polar residues-rich tracts occupy residues 95–110 (LLSESVASSQLDSTSV) and 120–133 (VQASVSDTAQQPSE). An AN1-type zinc finger spans residues 143 to 189 (KQKKNRCFMCRKKVGLTGFECRCGNVYCGVHRYSDVHNCSYNYKADA). Residues cysteine 149, cysteine 152, cysteine 163, cysteine 165, cysteine 170, histidine 173, histidine 179, and cysteine 181 each coordinate Zn(2+). Lysine 204 carries the N6-acetyllysine modification.

As to quaternary structure, interacts with PKN1. Interacts with TRAF2. Interacts with mono- and polyubiquitin. Interacts with PEX6. Interacts with PEX5 (Cys-linked ubiquitinated). As to expression, widely expressed with high level in heart, skeletal muscle, liver, kidney and placenta.

Its subcellular location is the cytoplasm. Functionally, involved in regulation of TNF-alpha induced NF-kappa-B activation and apoptosis. Involved in modulation of 'Lys-48'-linked polyubiquitination status of TRAF2 and decreases association of TRAF2 with RIPK1. Required for PTS1 target sequence-dependent protein import into peroxisomes and PEX5 stability; may cooperate with PEX6. In vitro involved in PEX5 export from the cytosol to peroxisomes. In Homo sapiens (Human), this protein is AN1-type zinc finger protein 6 (ZFAND6).